We begin with the raw amino-acid sequence, 352 residues long: MDYQVSSPTYDIDYYTSEPCQKINVKQIAARLLPPLYSLVFIFGFVGNMLVILILINCKRLKSMTDIYLLNLAISDLFFLLTVPFWAHYAAAQWDFGNTMCQLLTGLYFIGFFSGIFFIILLTIDRYLAIVHAVFALKARTVTFGVVTSVITWVVAVFASLPGIIFTRSQKEGLHYTCSSHFPYSQYQFWKNFQTLKIVILGLVLPLLVMVICYSGILKTLLRCRNEKKRHRAVRLIFTIMIVYFLFWAPYNIVLLLNTFQEFFGLNNCSSSNRLDQAMQVTETLGMTHCCINPIIYAFVGEKFRNYLLVFFQKHIAKRFCKCCSIFQQEAPERASSVYTRSTGEQEISVGL.

The Extracellular portion of the chain corresponds to 1–30 (MDYQVSSPTYDIDYYTSEPCQKINVKQIAA). Y3 bears the Sulfotyrosine mark. 2 O-linked (GalNAc...) serine glycosylation sites follow: S6 and S7. Y10, Y14, and Y15 each carry sulfotyrosine. 2 disulfides stabilise this stretch: C20–C269 and C101–C178. The chain crosses the membrane as a helical span at residues 31-58 (RLLPPLYSLVFIFGFVGNMLVILILINC). Residues 59-68 (KRLKSMTDIY) are Cytoplasmic-facing. Residues 69–89 (LLNLAISDLFFLLTVPFWAHY) form a helical membrane-spanning segment. At 90–102 (AAAQWDFGNTMCQ) the chain is on the extracellular side. Residues 103–124 (LLTGLYFIGFFSGIFFIILLTI) form a helical membrane-spanning segment. Residues 125–141 (DRYLAIVHAVFALKART) are Cytoplasmic-facing. The chain crosses the membrane as a helical span at residues 142–166 (VTFGVVTSVITWVVAVFASLPGIIF). Topologically, residues 167 to 198 (TRSQKEGLHYTCSSHFPYSQYQFWKNFQTLKI) are extracellular. A helical membrane pass occupies residues 199-218 (VILGLVLPLLVMVICYSGIL). Over 219–235 (KTLLRCRNEKKRHRAVR) the chain is Cytoplasmic. Residues 236–260 (LIFTIMIVYFLFWAPYNIVLLLNTF) traverse the membrane as a helical segment. The Extracellular segment spans residues 261 to 277 (QEFFGLNNCSSSNRLDQ). A helical membrane pass occupies residues 278–301 (AMQVTETLGMTHCCINPIIYAFVG). The Cytoplasmic portion of the chain corresponds to 302-352 (EKFRNYLLVFFQKHIAKRFCKCCSIFQQEAPERASSVYTRSTGEQEISVGL). S-palmitoyl cysteine attachment occurs at residues C321, C323, and C324. S336, S337, S342, and S349 each carry phosphoserine; by BARK1.

It belongs to the G-protein coupled receptor 1 family. As to quaternary structure, interacts with PRAF2. Efficient ligand binding to CCL3/MIP-1alpha and CCL4/MIP-1beta requires sulfation, O-glycosylation and sialic acid modifications. Glycosylation on Ser-6 is required for efficient binding of CCL4. Interacts with GRK2. Interacts with ARRB1 and ARRB2. Interacts with CNIH4. Interacts with S100A4; this interaction stimulates T-lymphocyte chemotaxis. Post-translationally, sulfated on at least 2 of the N-terminal tyrosines. Sulfation is required for efficient binding of the chemokines, CCL3 and CCL4. Palmitoylation in the C-terminal is important for cell surface expression. In terms of processing, phosphorylation on serine residues in the C-terminal is stimulated by binding CC chemokines especially by APO-RANTES. Post-translationally, O-glycosylated, but not N-glycosylated. Ser-6 appears to be the major site even if Ser-7 may be also O-glycosylated. Also sialylated glycans present which contribute to chemokine binding. Thr-16 and Ser-17 may also be glycosylated and, if so, with small moieties such as a T-antigen.

It is found in the cell membrane. Functionally, receptor for a number of inflammatory CC-chemokines including CCL3/MIP-1-alpha, CCL4/MIP-1-beta and RANTES and subsequently transduces a signal by increasing the intracellular calcium ion level. May play a role in the control of granulocytic lineage proliferation or differentiation. Participates in T-lymphocyte migration to the infection site by acting as a chemotactic receptor. The sequence is that of C-C chemokine receptor type 5 (CCR5) from Pongo abelii (Sumatran orangutan).